Consider the following 286-residue polypeptide: Protease HtpX (286 aa).

Helical transmembrane passes span 4–24 (ILLF…ILSL) and 33–53 (TGLL…SLFL). H139 provides a ligand contact to Zn(2+). E140 is a catalytic residue. H143 contributes to the Zn(2+) binding site. 2 helical membrane passes run 147-167 (GDMV…IFVS) and 186-206 (IYFL…SMIA). E214 contributes to the Zn(2+) binding site.

This sequence belongs to the peptidase M48B family. Zn(2+) serves as cofactor.

The protein localises to the cell inner membrane. In Pasteurella multocida (strain Pm70), this protein is Protease HtpX.